A 515-amino-acid chain; its full sequence is Dimethylnonatriene synthase (515 aa).

A helical transmembrane segment spans residues 3 to 23 (FLFSTLQLSLFSLALVIFGYI). A substrate-binding site is contributed by H219. K252 participates in a covalent cross-link: Glycyl lysine isopeptide (Lys-Gly) (interchain with G-Cter in ubiquitin). C452 is a heme binding site.

The protein belongs to the cytochrome P450 family. Heme serves as cofactor. Expressed in stems, flower peduncles, receptacle of developing and mature flowers and in stigma of mature opening flower buds.

Its subcellular location is the membrane. It catalyses the reaction (3S,6E)-nerolidol + reduced [NADPH--hemoprotein reductase] + O2 = (3E)-4,8-dimethylnona-1,3,7-triene + but-3-en-2-one + oxidized [NADPH--hemoprotein reductase] + 2 H2O + H(+). It carries out the reaction (6E,10E)-geranyllinalool + reduced [NADPH--hemoprotein reductase] + O2 = (3E,7E)-4,8,12-trimethyltrideca 1,3,7,11-tetraene + but-3-en-2-one + oxidized [NADPH--hemoprotein reductase] + 2 H2O + H(+). It functions in the pathway secondary metabolite biosynthesis; terpenoid biosynthesis. Involved in the biosynthesis of homoterpenes, attractants of herbivores parasitoids and predators (e.g. predatory mites and parasitoid wasps). Catalyzes the conversion of the C20 (E,E)-geranyllinalool to C16-homoterpene 4,8,12-trimethyltrideca-1,3,7,11-tetraene (TMTT) of the C15 (E)-nerolidol to C11-homoterpene (E)-4,8-dimethyl-1,3,7-nonatriene (DMNT); these volatile compounds are produced upon insect herbivore attack and emitted from flowers and vegetative tissues during herbivore feeding. Required during resistance responses to the fungus Alternaria brassicae. Prevents oviposition of the phloem-feeding insect cabbage whitefly (Aleyrodes proletella). This Arabidopsis thaliana (Mouse-ear cress) protein is Dimethylnonatriene synthase.